Consider the following 371-residue polypeptide: Cytochrome b (371 aa).

4 consecutive transmembrane segments (helical) span residues 25 to 45 (FGSM…FLAV), 69 to 90 (WMVQ…YIHI), 105 to 125 (WLSG…GYVL), and 170 to 190 (FFAL…LHVL). Residues His-75 and His-89 each contribute to the heme b site. Residues His-174 and His-188 each contribute to the heme b site. Residue His-193 coordinates a ubiquinone. 4 consecutive transmembrane segments (helical) span residues 218–238 (MKDL…ISFF), 280–300 (LGGA…PFIH), 312–332 (LMQL…WAAT), and 339–358 (FISI…ISNP).

The protein belongs to the cytochrome b family. In terms of assembly, the cytochrome bc1 complex contains 3 respiratory subunits (MT-CYB, CYC1 and UQCRFS1), 2 core proteins (UQCRC1 and UQCRC2) and probably 6 low-molecular weight proteins. The cofactor is heme b.

It localises to the mitochondrion inner membrane. Functionally, component of the ubiquinol-cytochrome c reductase complex (complex III or cytochrome b-c1 complex) that is part of the mitochondrial respiratory chain. The b-c1 complex mediates electron transfer from ubiquinol to cytochrome c. Contributes to the generation of a proton gradient across the mitochondrial membrane that is then used for ATP synthesis. The chain is Cytochrome b (MT-CYB) from Boa constrictor (Boa).